The sequence spans 404 residues: Exodeoxyribonuclease 7 large subunit (404 aa).

This sequence belongs to the XseA family. In terms of assembly, heterooligomer composed of large and small subunits.

It localises to the cytoplasm. The catalysed reaction is Exonucleolytic cleavage in either 5'- to 3'- or 3'- to 5'-direction to yield nucleoside 5'-phosphates.. Bidirectionally degrades single-stranded DNA into large acid-insoluble oligonucleotides, which are then degraded further into small acid-soluble oligonucleotides. This is Exodeoxyribonuclease 7 large subunit from Caldanaerobacter subterraneus subsp. tengcongensis (strain DSM 15242 / JCM 11007 / NBRC 100824 / MB4) (Thermoanaerobacter tengcongensis).